The sequence spans 119 residues: MICOS complex subunit MIC13 (119 aa).

Residues 1–7 (MVARVWS) lie on the Mitochondrial matrix side of the membrane. Residues 8–26 (LMRFLIKGSVAGGAVYLVY) form a helical membrane-spanning segment. At 27–119 (DQELLGPSDK…GWEYLKEHSK (93 aa)) the chain is on the mitochondrial intermembrane side.

It belongs to the MICOS complex subunit Mic13 family. As to quaternary structure, component of the mitochondrial contact site and cristae organizing system (MICOS) complex, composed of at least MICOS10/MIC10, CHCHD3/MIC19, CHCHD6/MIC25, APOO/MIC26, MICOS13/MIC13, APOOL/MIC27 and IMMT/MIC60. The MICOS complex associates with mitochondrial outer membrane proteins SAMM50, MTX1 and MTX2 (together described as components of the mitochondrial outer membrane sorting assembly machinery (SAM) complex) and DNAJC11, mitochondrial inner membrane protein TMEM11 and with HSPA9. The MICOS and SAM complexes together with DNAJC11 are part of a large protein complex spanning both membranes termed the mitochondrial intermembrane space bridging (MIB) complex.

It localises to the mitochondrion inner membrane. In terms of biological role, component of the MICOS complex, a large protein complex of the mitochondrial inner membrane that plays crucial roles in the maintenance of crista junctions, inner membrane architecture, and formation of contact sites to the outer membrane. Constituent of mature MICOS complex, it is required for the formation of cristae junction (CJ) and maintenance of cristae morphology. Required for the incorporation of MICOS10/MIC10 into the MICOS complex. In Mus musculus (Mouse), this protein is MICOS complex subunit MIC13 (Micos13).